Consider the following 1935-residue polypeptide: Myosin-7 (1935 aa).

The region spanning 32 to 81 (DLKKDVYVPDDKEEFVKAKILSREGGKVTAETEHGKTVTVKEDQVLQQNP) is the Myosin N-terminal SH3-like domain. The 694-residue stretch at 85–778 (DKIEDMAMLT…LLGLLEEMRD (694 aa)) folds into the Myosin motor domain. Position 129 is an N6,N6,N6-trimethyllysine (K129). 178–185 (GESGAGKT) serves as a coordination point for ATP. T378 is subject to Phosphothreonine. Actin-binding stretches follow at residues 655-677 (LNKLMTNLRSTHPHFVRCIIPNE) and 757-771 (KFGHTKVFFKAGLLG). Positions 781–810 (LSRIITRIQAQSRGVLSRMEFKKLLERRDS) constitute an IQ domain. Positions 839–1935 (LLKSAETEKE…DIGTKGLNEE (1097 aa)) form a coiled coil. A phosphoserine mark is found at S1137 and S1269. T1282 is modified (phosphothreonine). Residue Y1308 is modified to Phosphotyrosine. T1309 bears the Phosphothreonine mark. S1510 carries the phosphoserine modification. T1513 is modified (phosphothreonine). Residues 1907 to 1935 (EERADIAESQVNKLRAKSRDIGTKGLNEE) are disordered. Residues 1923–1935 (KSRDIGTKGLNEE) are compositionally biased toward basic and acidic residues.

This sequence belongs to the TRAFAC class myosin-kinesin ATPase superfamily. Myosin family. In terms of assembly, muscle myosin is a hexameric protein that consists of 2 heavy chain subunits (MHC), 2 alkali light chain subunits (MLC) and 2 regulatory light chain subunits (MLC-2). Interacts with ECPAS. Interacts (via C-terminus) with LRRC39.

It localises to the cytoplasm. It is found in the myofibril. The protein localises to the sarcomere. In terms of biological role, myosins are actin-based motor molecules with ATPase activity essential for muscle contraction. Forms regular bipolar thick filaments that, together with actin thin filaments, constitute the fundamental contractile unit of skeletal and cardiac muscle. The chain is Myosin-7 (MYH7) from Sus scrofa (Pig).